We begin with the raw amino-acid sequence, 511 residues long: 60 kDa neurofilament protein (511 aa).

A disordered region spans residues methionine 1–serine 32. Residues methionine 1–aspartate 99 form a head region. The span at arginine 21–serine 30 shows a compositional bias: polar residues. In terms of domain architecture, IF rod spans glutamate 96 to valine 449. The interval methionine 100 to tryptophan 135 is coil 1A. Residues glycine 136 to methionine 145 form a linker 1 region. The interval tyrosine 146 to alanine 284 is coil 1B. The interval alanine 285–leucine 303 is linker 12. Residues alanine 304–valine 449 form a coil 2 region. The interval glycine 450 to aspartate 511 is tail. A disordered region spans residues glycine 479–aspartate 511. Residues threonine 483–threonine 492 show a composition bias toward low complexity. The span at glutamine 495–aspartate 511 shows a compositional bias: basic and acidic residues.

Belongs to the intermediate filament family.

Major squid neurofilament protein. The protein is 60 kDa neurofilament protein of Doryteuthis pealeii (Longfin inshore squid).